Here is a 587-residue protein sequence, read N- to C-terminus: Arginine--tRNA ligase (587 aa).

The 'HIGH' region signature appears at 126 to 136 (ANPTGPLHVGH).

The protein belongs to the class-I aminoacyl-tRNA synthetase family. In terms of assembly, monomer.

It is found in the cytoplasm. It catalyses the reaction tRNA(Arg) + L-arginine + ATP = L-arginyl-tRNA(Arg) + AMP + diphosphate. The sequence is that of Arginine--tRNA ligase from Azoarcus sp. (strain BH72).